The chain runs to 170 residues: UPF0260 protein RPB_3505 (170 aa).

Belongs to the UPF0260 family.

The sequence is that of UPF0260 protein RPB_3505 from Rhodopseudomonas palustris (strain HaA2).